The sequence spans 142 residues: Putative pre-16S rRNA nuclease (142 aa).

It belongs to the YqgF nuclease family.

It is found in the cytoplasm. Its function is as follows. Could be a nuclease involved in processing of the 5'-end of pre-16S rRNA. The polypeptide is Putative pre-16S rRNA nuclease (Lactobacillus helveticus (strain DPC 4571)).